A 653-amino-acid polypeptide reads, in one-letter code: J protein JJJ2 (653 aa).

The J domain maps to 14 to 78; sequence TLYSVLNLKY…KEKMKYDSKL (65 aa). Disordered regions lie at residues 85 to 308 and 490 to 512; these read DYSP…SSTE and VSPKPRSVPSKTTPGSSHAEENL. 2 stretches are compositionally biased toward polar residues: residues 161 to 171 and 187 to 200; these read NAKSYQNSKKS and ATSFSNENRNSSSV. Residues 213-241 are compositionally biased toward low complexity; sequence SGSAVGSESRISSSGSESSSNVNSATGSS. The segment covering 298 to 308 has biased composition (polar residues); that stretch reads PVKTTPNSSTE.

Its subcellular location is the cytoplasm. It is found in the nucleus. The polypeptide is J protein JJJ2 (JJJ2) (Kluyveromyces lactis (strain ATCC 8585 / CBS 2359 / DSM 70799 / NBRC 1267 / NRRL Y-1140 / WM37) (Yeast)).